A 146-amino-acid chain; its full sequence is Small ribosomal subunit protein bS16 (146 aa).

The disordered stretch occupies residues 119–146 (GSENKGGKSKKAEEKSAEKTAEKSEGEA). The segment covering 128–146 (KKAEEKSAEKTAEKSEGEA) has biased composition (basic and acidic residues).

This sequence belongs to the bacterial ribosomal protein bS16 family.

This Thermobifida fusca (strain YX) protein is Small ribosomal subunit protein bS16.